Here is a 167-residue protein sequence, read N- to C-terminus: CASP-like protein UU1 (167 aa).

The Cytoplasmic portion of the chain corresponds to 1–17 (MVELESQEAVTVASTAD). A helical transmembrane segment spans residues 18 to 38 (IAVDVSLRLLAAATSLASAVV). Over 39 to 54 (VAANHQQRWGVRVDFT) the chain is Extracellular. A helical membrane pass occupies residues 55–75 (LFQVWIGFVAVNLVCTVYAAA). Topologically, residues 76–94 (TAAAARKAMGRWWLHHADA) are cytoplasmic. A helical membrane pass occupies residues 95 to 115 (VVVNLEAAATAGAGAIGSIAM). Residues 116–135 (WGNEASGWYAVCRLYRRYCN) are Extracellular-facing. The chain crosses the membrane as a helical span at residues 136–156 (AGAAALALSLAAVLLLGVACA). Topologically, residues 157 to 167 (RSRYPKMPPTT) are cytoplasmic.

The protein belongs to the Casparian strip membrane proteins (CASP) family. In terms of assembly, homodimer and heterodimers.

It localises to the cell membrane. This Oryza sativa subsp. indica (Rice) protein is CASP-like protein UU1.